A 450-amino-acid chain; its full sequence is FAD-linked oxidoreductase ptmO (450 aa).

One can recognise an FAD-binding PCMH-type domain in the interval 32–203; that stretch reads PPELPYAIVR…TRFFIRTRPA (172 aa).

Belongs to the oxygen-dependent FAD-linked oxidoreductase family. It depends on FAD as a cofactor.

It participates in secondary metabolite biosynthesis. In terms of biological role, FAD-linked oxidoreductase; part of the gene cluster that mediates the biosynthesis of the indole diterpenes penitrems. The geranylgeranyl diphosphate (GGPP) synthase ptmG catalyzes the first step in penitrem biosynthesis via conversion of farnesyl pyrophosphate and isopentyl pyrophosphate into geranylgeranyl pyrophosphate (GGPP). Condensation of indole-3-glycerol phosphate with GGPP by the prenyl transferase ptmC then forms 3-geranylgeranylindole (3-GGI). Epoxidation by the FAD-dependent monooxygenase ptmM leads to a epoxidized-GGI that is substrate of the terpene cyclase ptmB for cyclization to yield paspaline. Paspaline is subsequently converted to 13-desoxypaxilline by the cytochrome P450 monooxygenase ptmP, the latter being then converted to paxilline by the cytochrome P450 monooxygenase ptmQ. Paxilline is converted to beta-paxitriol via C-10 ketoreduction by the short-chain dehydrogenase ptmH which can be monoprenylated at the C-20 by the indole diterpene prenyltransferase ptmD. A two-step elimination (acetylation and elimination) process performed by the O-acetyltransferase ptmV and ptmI leads to the production of the prenylated form of penijanthine. The FAD-linked oxidoreductase ptmO then converts the prenylated form of penijanthine into PC-M5 which is in turn transformed into PC-M4 by the aromatic dimethylallyltransferase ptmE. Five sequential oxidative transformations performed by the cytochrome P450 monooxygenases ptmK, ptmU, ptmL, ptmN and ptmJ yield the various penitrem compounds. PtmK, ptmU and ptmM are involved in the formation of the key bicyclic ring of penitrem C via the formation of the intermediates secopenitrem D and penitrem D. PtmL catalyzes the epoxidation of penitrem D and C to yield penitrem B and F, respectively. PtmJ catalyzes the last benzylic hydroxylation to convert penitrem B to prenitrem E and penitrem F to penitrem A. This Penicillium ochrochloron protein is FAD-linked oxidoreductase ptmO.